The chain runs to 148 residues: Large ribosomal subunit protein uL13 (148 aa).

The protein belongs to the universal ribosomal protein uL13 family. As to quaternary structure, part of the 50S ribosomal subunit.

Its function is as follows. This protein is one of the early assembly proteins of the 50S ribosomal subunit, although it is not seen to bind rRNA by itself. It is important during the early stages of 50S assembly. This chain is Large ribosomal subunit protein uL13, found in Sulfolobus acidocaldarius (strain ATCC 33909 / DSM 639 / JCM 8929 / NBRC 15157 / NCIMB 11770).